A 429-amino-acid polypeptide reads, in one-letter code: Glucose-1-phosphate adenylyltransferase (429 aa).

Alpha-D-glucose 1-phosphate-binding positions include G162, E177–K178, and S209.

It belongs to the bacterial/plant glucose-1-phosphate adenylyltransferase family. As to quaternary structure, homotetramer.

It carries out the reaction alpha-D-glucose 1-phosphate + ATP + H(+) = ADP-alpha-D-glucose + diphosphate. The protein operates within glycan biosynthesis; glycogen biosynthesis. In terms of biological role, involved in the biosynthesis of ADP-glucose, a building block required for the elongation reactions to produce glycogen. Catalyzes the reaction between ATP and alpha-D-glucose 1-phosphate (G1P) to produce pyrophosphate and ADP-Glc. This chain is Glucose-1-phosphate adenylyltransferase, found in Gloeothece citriformis (strain PCC 7424) (Cyanothece sp. (strain PCC 7424)).